The primary structure comprises 173 residues: Large ribosomal subunit protein uL14mz (173 aa).

The transit peptide at Met-1–Gly-61 directs the protein to the mitochondrion.

The protein belongs to the universal ribosomal protein uL14 family. Part of the mitochondrial 50S ribosomal subunit. As to expression, mostly expressed in leaves and inflorescences, including floral organs and meristems, and, to a lower extent, in pistils.

It localises to the mitochondrion. Its function is as follows. Binds to 23S rRNA in mitochondrion. The chain is Large ribosomal subunit protein uL14mz (HLP) from Arabidopsis thaliana (Mouse-ear cress).